The chain runs to 166 residues: Small ribosomal subunit protein uS5 (166 aa).

An S5 DRBM domain is found at 11–74 (LQEKLIAVNR…EKARRNMINV (64 aa)).

The protein belongs to the universal ribosomal protein uS5 family. In terms of assembly, part of the 30S ribosomal subunit. Contacts proteins S4 and S8.

With S4 and S12 plays an important role in translational accuracy. In terms of biological role, located at the back of the 30S subunit body where it stabilizes the conformation of the head with respect to the body. The polypeptide is Small ribosomal subunit protein uS5 (Mannheimia succiniciproducens (strain KCTC 0769BP / MBEL55E)).